Consider the following 246-residue polypeptide: CTD nuclear envelope phosphatase 1 homolog (246 aa).

Residues 3–23 (TIAQSVFCFLAGFFNFFLLYF) traverse the membrane as a helical segment. The FCP1 homology domain occupies 53-220 (LTVKRKILVL…LNLLPFLDAL (168 aa)).

Belongs to the dullard family.

It is found in the membrane. It localises to the nucleus envelope. The catalysed reaction is O-phospho-L-seryl-[protein] + H2O = L-seryl-[protein] + phosphate. It catalyses the reaction O-phospho-L-threonyl-[protein] + H2O = L-threonyl-[protein] + phosphate. In terms of biological role, serine/threonine protein phosphatase that may dephosphorylate and activate lipin-like phosphatases. Lipins are phosphatidate phosphatases that catalyze the conversion of phosphatidic acid to diacylglycerol and control the metabolism of fatty acids at different levels. May indirectly modulate the lipid composition of nuclear and/or endoplasmic reticulum membranes and be required for proper nuclear membrane morphology and/or dynamics. Contributes to closure of nuclear envelope (NE) holes and prevents excess nuclear membranes after meiosis and mitosis, possibly through spatial regulation of lipin. May limit the production of endoplasmic reticulum (ER) sheets proximal to the NE to prevent the ER membranes that feed into NE openings from invading the nuclear interior and thereby restrict nuclear transport to nuclear pore complexes (NPCs). May also indirectly regulate the production of lipid droplets and triacylglycerol. This chain is CTD nuclear envelope phosphatase 1 homolog (cnep-1), found in Caenorhabditis elegans.